The following is a 364-amino-acid chain: Protein RecA (364 aa).

ATP is bound at residue 77 to 84 (GPESSGKT). The tract at residues 343 to 364 (DRFLQNGGPDPDDGDGDATAEM) is disordered. Residues 352–364 (DPDDGDGDATAEM) show a composition bias toward acidic residues.

The protein belongs to the RecA family.

Its subcellular location is the cytoplasm. Functionally, can catalyze the hydrolysis of ATP in the presence of single-stranded DNA, the ATP-dependent uptake of single-stranded DNA by duplex DNA, and the ATP-dependent hybridization of homologous single-stranded DNAs. It interacts with LexA causing its activation and leading to its autocatalytic cleavage. This is Protein RecA from Rhizobium johnstonii (strain DSM 114642 / LMG 32736 / 3841) (Rhizobium leguminosarum bv. viciae).